The chain runs to 103 residues: Protein translation factor SUI1 homolog (103 aa).

It belongs to the SUI1 family.

The polypeptide is Protein translation factor SUI1 homolog (Hyperthermus butylicus (strain DSM 5456 / JCM 9403 / PLM1-5)).